Here is a 347-residue protein sequence, read N- to C-terminus: Phosphoribosylformylglycinamidine cyclo-ligase (347 aa).

It belongs to the AIR synthase family.

Its subcellular location is the cytoplasm. The enzyme catalyses 2-formamido-N(1)-(5-O-phospho-beta-D-ribosyl)acetamidine + ATP = 5-amino-1-(5-phospho-beta-D-ribosyl)imidazole + ADP + phosphate + H(+). The protein operates within purine metabolism; IMP biosynthesis via de novo pathway; 5-amino-1-(5-phospho-D-ribosyl)imidazole from N(2)-formyl-N(1)-(5-phospho-D-ribosyl)glycinamide: step 2/2. The polypeptide is Phosphoribosylformylglycinamidine cyclo-ligase (Prochlorococcus marinus (strain MIT 9301)).